A 447-amino-acid polypeptide reads, in one-letter code: N-succinylarginine dihydrolase (447 aa).

Residues 21 to 30, Asn112, and 139 to 140 each bind substrate; these read AGLAHGNVAS and HR. The active site involves Glu176. Arg215 is a substrate binding site. His251 is a catalytic residue. Substrate contacts are provided by Asp253 and Asn364. Cys370 functions as the Nucleophile in the catalytic mechanism.

Belongs to the succinylarginine dihydrolase family. In terms of assembly, homodimer.

It carries out the reaction N(2)-succinyl-L-arginine + 2 H2O + 2 H(+) = N(2)-succinyl-L-ornithine + 2 NH4(+) + CO2. It participates in amino-acid degradation; L-arginine degradation via AST pathway; L-glutamate and succinate from L-arginine: step 2/5. Its function is as follows. Catalyzes the hydrolysis of N(2)-succinylarginine into N(2)-succinylornithine, ammonia and CO(2). The protein is N-succinylarginine dihydrolase of Chromohalobacter salexigens (strain ATCC BAA-138 / DSM 3043 / CIP 106854 / NCIMB 13768 / 1H11).